A 716-amino-acid polypeptide reads, in one-letter code: FLYWCH-type zinc finger-containing protein 1 (716 aa).

Residues 1–35 (MPLPEPSEQEGESVKAGQEPSPKPGTDVIPAAPRK) are disordered. Position 21 is a phosphoserine (Ser-21). Residues 116–174 (FLRTPFGGRLLVLESFLYKQEKAVGDKVYWKCRQHAELGCRGRAITRGLRATVMRGHCH) form an FLYWCH-type 1 zinc finger. Residue Lys-134 forms a Glycyl lysine isopeptide (Lys-Gly) (interchain with G-Cter in SUMO2) linkage. The segment at 191 to 231 (PSLALPEGLGEPQGPEGPGGRVEEPLEGVGPWQCPEEPEPT) is disordered. Residues 195–204 (LPEGLGEPQG) show a composition bias toward low complexity. Position 261 is a phosphoserine (Ser-261). The FLYWCH-type 2 zinc-finger motif lies at 273 to 331 (FLRTCYGGSFLVHESFLYKREKAVGDKVYWTCRDHALHGCRSRAITQGQRVTVMRGHCH). Ser-371 carries the post-translational modification Phosphoserine. The interval 377–421 (GPGPLTLTRPRPRKRAKVEDQELPTQPEAPDEHQDMDADPGGPEF) is disordered. Residue Lys-393 forms a Glycyl lysine isopeptide (Lys-Gly) (interchain with G-Cter in SUMO2) linkage. The FLYWCH-type 3 zinc-finger motif lies at 421–479 (FLKTPLGGSFLVYESFLYRREKAAGEKVYWTCRDQARMGCRSRAITQGRRVTVMRGHCH). Ser-503 is modified (phosphoserine). The FLYWCH-type 4 zinc finger occupies 509-567 (FLKTPLGGSFLVYESFLYRREKAAGEKVYWTCRDQARMGCRSRAITQGRRVMVMRRHCH). Ser-591 is modified (phosphoserine). The FLYWCH-type 5 zinc-finger motif lies at 600 to 658 (FLRTSLGGRFLVHESFLYRKEKAAGEKVYWMCRDQARLGCRSRAITQGHRIMVMRSHCH). A Glycyl lysine isopeptide (Lys-Gly) (interchain with G-Cter in SUMO2) cross-link involves residue Lys-685. Ser-696 bears the Phosphoserine mark.

In terms of assembly, interacts with CTNNB1 (when unphosphorylated), perhaps preventing interaction of CTNNB1 with TCF4, and thereby regulating transcription activation; phosphorylation of CTNNB1 may inhibit the interaction.

It is found in the nucleus. The protein resides in the chromosome. The protein localises to the centromere. Its function is as follows. Transcription cofactor. Negatively regulates transcription activation by catenin beta-1 CTNNB1, perhaps acting by competing with TCF4 for CTNNB1 binding. May play a role in DNA-damage response signaling. Binds specifically to DNA sequences at peri-centromeric chromatin loci. In Homo sapiens (Human), this protein is FLYWCH-type zinc finger-containing protein 1 (FLYWCH1).